The chain runs to 497 residues: ADP-dependent glucokinase (497 aa).

An N-terminal signal peptide occupies residues 1 to 22 (MALWRGSAYAGFLALAVGCVFL). One can recognise an ADPK domain in the interval 52–497 (SPEGRLAAAW…LFYSEVHPHY (446 aa)). Glu297, Glu328, and Asp481 together coordinate Mg(2+). Asp481 functions as the Proton acceptor in the catalytic mechanism.

Belongs to the ADP-dependent glucokinase family. In terms of assembly, monomer. The cofactor is Mg(2+).

It is found in the secreted. It catalyses the reaction D-glucose + ADP = D-glucose 6-phosphate + AMP + H(+). The protein operates within carbohydrate degradation; glycolysis. Its function is as follows. Catalyzes the phosphorylation of D-glucose to D-glucose 6-phosphate using ADP as the phosphate donor. GDP and CDP can replace ADP, but with reduced efficiency. The chain is ADP-dependent glucokinase (ADPGK) from Homo sapiens (Human).